The primary structure comprises 38 residues: Photosystem II reaction center protein L (38 aa).

Residues 17–37 (SLYWGLLLIFVLAVSFSNYFF) traverse the membrane as a helical segment.

The protein belongs to the PsbL family. In terms of assembly, PSII is composed of 1 copy each of membrane proteins PsbA, PsbB, PsbC, PsbD, PsbE, PsbF, PsbH, PsbI, PsbJ, PsbK, PsbL, PsbM, PsbT, PsbX, PsbY, PsbZ, Psb30/Ycf12, at least 3 peripheral proteins of the oxygen-evolving complex and a large number of cofactors. It forms dimeric complexes.

The protein resides in the plastid. The protein localises to the chloroplast thylakoid membrane. One of the components of the core complex of photosystem II (PSII). PSII is a light-driven water:plastoquinone oxidoreductase that uses light energy to abstract electrons from H(2)O, generating O(2) and a proton gradient subsequently used for ATP formation. It consists of a core antenna complex that captures photons, and an electron transfer chain that converts photonic excitation into a charge separation. This subunit is found at the monomer-monomer interface and is required for correct PSII assembly and/or dimerization. The polypeptide is Photosystem II reaction center protein L (Amborella trichopoda).